The sequence spans 491 residues: F-box/LRR-repeat protein 7 (491 aa).

The disordered stretch occupies residues 1 to 79; it reads MGANNGKQYG…GRGSSTSSSS (79 aa). Positions 10–26 are enriched in low complexity; that stretch reads GSEGKGSSSISSDVSSS. The span at 27 to 55 shows a compositional bias: polar residues; that stretch reads TDHTPTKAQKNVATSEDSDLSMRTLSTPS. Residues 111-157 enclose the F-box domain; it reads QASIDRLPDHSMVQIFSFLPTNQLCRCARVCRRWYNLAWDPRLWRTI. LRR repeat units lie at residues 170–195, 196–221, 222–247, 253–281, 282–307, 308–333, 334–359, 360–385, 386–411, 412–437, and 438–463; these read LKVL…TVSG, CRRL…EVSG, CYNI…DVSG, CISL…DMTD, CFVL…YLRR, CVRL…SVSD, CRFV…SIAH, CGRV…NARG, CEGI…DIGK, CPLV…SLKS, and CESI…NVQD.

Belongs to the FBXL7 family. Part of the SCF (SKP1-CUL1-F-box) E3 ubiquitin-protein ligase complex SCF(FBXL7) composed of CUL1, SKP1, RBX1 and FBXL7. Interacts with AURKA; interaction takes place during mitosis but not in interphase. Interacts with BIRC5; this interaction allows BIRC5 to be polyubiquitinated by the SCF(FBXL7) E3 ubiquitin-protein ligase complex.

The protein resides in the cytoplasm. It is found in the cytoskeleton. It localises to the microtubule organizing center. The protein localises to the centrosome. The protein operates within protein modification; protein ubiquitination. Substrate recognition component of a SCF (SKP1-CUL1-F-box protein) E3 ubiquitin-protein ligase complex. During mitosis, it mediates the ubiquitination and subsequent proteasomal degradation of AURKA, causing mitotic arrest. It also regulates mitochondrial function by mediating the ubiquitination and proteasomal degradation of the apoptosis inhibitor BIRC5. This chain is F-box/LRR-repeat protein 7 (FBXL7), found in Homo sapiens (Human).